Here is a 318-residue protein sequence, read N- to C-terminus: NADH-ubiquinone oxidoreductase chain 1 (318 aa).

8 helical membrane passes run 2–22 (FLVNLLLMIIPILLAVAFLTL), 70–90 (MFIMAPILALSLALTMWTPLP), 100–120 (LGVLFILAMSSLAVYSILWSG), 140–160 (ISYEVTLAIILLSVLLMSGSF), 172–192 (LWLIIPAWPLAMMWFISTLAE), 217–237 (GGSFALFFLAEYANIIMMNAI), 253–273 (EFYTTSFMIKTLLMTITFLWI), and 294–314 (LPLTLALCMWHVSIPILTASI).

This sequence belongs to the complex I subunit 1 family. As to quaternary structure, core subunit of respiratory chain NADH dehydrogenase (Complex I) which is composed of 45 different subunits.

It is found in the mitochondrion inner membrane. It catalyses the reaction a ubiquinone + NADH + 5 H(+)(in) = a ubiquinol + NAD(+) + 4 H(+)(out). Its function is as follows. Core subunit of the mitochondrial membrane respiratory chain NADH dehydrogenase (Complex I) which catalyzes electron transfer from NADH through the respiratory chain, using ubiquinone as an electron acceptor. Essential for the catalytic activity and assembly of complex I. This is NADH-ubiquinone oxidoreductase chain 1 (MT-ND1) from Emballonura alecto (Philippine sheath-tailed bat).